We begin with the raw amino-acid sequence, 530 residues long: Per os infectivity factor 1 (530 aa).

Positions 1–15 (MHFAIILLFLLVIIA) are cleaved as a signal peptide.

In terms of assembly, forms the PIF complex together with PIF2 and PIF3. The complex also interacts with per os infectivity factor PIF0.

The protein localises to the virion membrane. Its function is as follows. Per os infectivity factor that mediates the specific binding of occluded virions (ODV) to the host midgut target cells. In Autographa californica nuclear polyhedrosis virus (AcMNPV), this protein is Per os infectivity factor 1.